We begin with the raw amino-acid sequence, 173 residues long: Shikimate kinase 1 (173 aa).

14–19 (GAGKST) is an ATP binding site. Ser18 lines the Mg(2+) pocket. 3 residues coordinate substrate: Asp36, Arg60, and Gly82. Residue Arg120 coordinates ATP. Arg140 is a substrate binding site. ATP is bound at residue Gln157.

The protein belongs to the shikimate kinase family. Monomer. Requires Mg(2+) as cofactor.

Its subcellular location is the cytoplasm. It catalyses the reaction shikimate + ATP = 3-phosphoshikimate + ADP + H(+). It participates in metabolic intermediate biosynthesis; chorismate biosynthesis; chorismate from D-erythrose 4-phosphate and phosphoenolpyruvate: step 5/7. Functionally, catalyzes the specific phosphorylation of the 3-hydroxyl group of shikimic acid using ATP as a cosubstrate. The protein is Shikimate kinase 1 of Pectobacterium atrosepticum (strain SCRI 1043 / ATCC BAA-672) (Erwinia carotovora subsp. atroseptica).